The following is a 418-amino-acid chain: 3-isopropylmalate dehydratase large subunit 1 (418 aa).

Residues C298, C358, and C361 each contribute to the [4Fe-4S] cluster site.

Belongs to the aconitase/IPM isomerase family. LeuC type 2 subfamily. Heterodimer of LeuC and LeuD. [4Fe-4S] cluster serves as cofactor.

The enzyme catalyses (2R,3S)-3-isopropylmalate = (2S)-2-isopropylmalate. Its pathway is amino-acid biosynthesis; L-leucine biosynthesis; L-leucine from 3-methyl-2-oxobutanoate: step 2/4. Functionally, catalyzes the isomerization between 2-isopropylmalate and 3-isopropylmalate, via the formation of 2-isopropylmaleate. The chain is 3-isopropylmalate dehydratase large subunit 1 from Archaeoglobus fulgidus (strain ATCC 49558 / DSM 4304 / JCM 9628 / NBRC 100126 / VC-16).